We begin with the raw amino-acid sequence, 127 residues long: Gamma-synuclein (127 aa).

2 tandem repeats follow at residues 20 to 30 (EKTKQGVTEAA) and 31 to 41 (EKTKEGVMYVG). The tract at residues 20–67 (EKTKQGVTEAAEKTKEGVMYVGAKTKEGVVQSVTSVAEKTKEQANAVS) is 4 X 11 AA tandem repeats of [EGSA]-K-T-K-[EQ]-[GQ]-V-X(4). The stretch at 42–56 (AKTKEGVVQSVTSVA) is one 3; approximate repeat. Residues 57–67 (EKTKEQANAVS) form repeat 4. Ser67, Ser72, and Ser124 each carry phosphoserine. The interval 99–127 (ALKQPVPSQEDEAAKAEEQVAEETKSGGD) is disordered. The segment covering 110-127 (EAAKAEEQVAEETKSGGD) has biased composition (basic and acidic residues).

This sequence belongs to the synuclein family. May be a centrosome-associated protein. Interacts with MYOC; affects its secretion and its aggregation. Post-translationally, phosphorylated by BARK1 and GRK5. In terms of tissue distribution, predominantly expressed in retina (predominantly in outer nuclear layer, also in inner segment of photoreceptor cells, some individual cells located in the inner nuclear layer, inner plexiform layer and in nerve fiber layer). Also found in brain and heart.

It localises to the cytoplasm. The protein localises to the perinuclear region. Its subcellular location is the cytoskeleton. The protein resides in the microtubule organizing center. It is found in the centrosome. It localises to the spindle. In terms of biological role, plays a role in neurofilament network integrity. May be involved in modulating axonal architecture during development and in the adult. In vitro, increases the susceptibility of neurofilament-H to calcium-dependent proteases. May also function in modulating the keratin network in skin. Activates the MAPK and Elk-1 signal transduction pathway. In Bos taurus (Bovine), this protein is Gamma-synuclein (SNCG).